The primary structure comprises 95 residues: Glutamyl-tRNA(Gln) amidotransferase subunit C (95 aa).

Belongs to the GatC family. As to quaternary structure, heterotrimer of A, B and C subunits.

The catalysed reaction is L-glutamyl-tRNA(Gln) + L-glutamine + ATP + H2O = L-glutaminyl-tRNA(Gln) + L-glutamate + ADP + phosphate + H(+). It catalyses the reaction L-aspartyl-tRNA(Asn) + L-glutamine + ATP + H2O = L-asparaginyl-tRNA(Asn) + L-glutamate + ADP + phosphate + 2 H(+). Functionally, allows the formation of correctly charged Asn-tRNA(Asn) or Gln-tRNA(Gln) through the transamidation of misacylated Asp-tRNA(Asn) or Glu-tRNA(Gln) in organisms which lack either or both of asparaginyl-tRNA or glutaminyl-tRNA synthetases. The reaction takes place in the presence of glutamine and ATP through an activated phospho-Asp-tRNA(Asn) or phospho-Glu-tRNA(Gln). This is Glutamyl-tRNA(Gln) amidotransferase subunit C from Caulobacter vibrioides (strain ATCC 19089 / CIP 103742 / CB 15) (Caulobacter crescentus).